A 298-amino-acid polypeptide reads, in one-letter code: Foldase protein PrsA 1 (298 aa).

An N-terminal signal peptide occupies residues 1–19 (MKKWLIALAGVLLTFTLAG). The N-palmitoyl cysteine moiety is linked to residue C20. C20 carries the S-diacylglycerol cysteine lipid modification. Positions 136 to 232 (EPKVTVQHIL…NGYEIIRMIK (97 aa)) constitute a PpiC domain.

Belongs to the PrsA family.

The protein localises to the cell membrane. The enzyme catalyses [protein]-peptidylproline (omega=180) = [protein]-peptidylproline (omega=0). Its function is as follows. Plays a major role in protein secretion by helping the post-translocational extracellular folding of several secreted proteins. This chain is Foldase protein PrsA 1 (prsA1), found in Lactiplantibacillus plantarum (strain ATCC BAA-793 / NCIMB 8826 / WCFS1) (Lactobacillus plantarum).